Consider the following 466-residue polypeptide: Uronate isomerase (466 aa).

Belongs to the metallo-dependent hydrolases superfamily. Uronate isomerase family.

It carries out the reaction D-glucuronate = D-fructuronate. The catalysed reaction is aldehydo-D-galacturonate = keto-D-tagaturonate. Its pathway is carbohydrate metabolism; pentose and glucuronate interconversion. This chain is Uronate isomerase, found in Brucella suis (strain ATCC 23445 / NCTC 10510).